We begin with the raw amino-acid sequence, 584 residues long: Arginine--tRNA ligase (584 aa).

The short motif at P126 to H136 is the 'HIGH' region element.

It belongs to the class-I aminoacyl-tRNA synthetase family. As to quaternary structure, monomer.

Its subcellular location is the cytoplasm. The enzyme catalyses tRNA(Arg) + L-arginine + ATP = L-arginyl-tRNA(Arg) + AMP + diphosphate. This is Arginine--tRNA ligase from Synechococcus elongatus (strain ATCC 33912 / PCC 7942 / FACHB-805) (Anacystis nidulans R2).